The chain runs to 223 residues: Large ribosomal subunit protein uL6c (223 aa).

A chloroplast-targeting transit peptide spans 1–41; sequence MASSLVSSFQPRSAFLGDRNVFKVSSTPFAQVGYSSKTIEC.

The protein belongs to the universal ribosomal protein uL6 family. Part of the 50S ribosomal subunit.

It localises to the plastid. Its subcellular location is the chloroplast. In terms of biological role, this protein binds directly to 23S ribosomal RNA and is located at the aminoacyl-tRNA binding site of the peptidyltransferase center. This Arabidopsis thaliana (Mouse-ear cress) protein is Large ribosomal subunit protein uL6c (RPL6).